A 354-amino-acid chain; its full sequence is Uroporphyrinogen decarboxylase (354 aa).

Residues 27 to 31 (RQAGR), Asp-77, Tyr-153, Thr-208, and His-326 each bind substrate.

This sequence belongs to the uroporphyrinogen decarboxylase family. In terms of assembly, homodimer.

Its subcellular location is the cytoplasm. It catalyses the reaction uroporphyrinogen III + 4 H(+) = coproporphyrinogen III + 4 CO2. It participates in porphyrin-containing compound metabolism; protoporphyrin-IX biosynthesis; coproporphyrinogen-III from 5-aminolevulinate: step 4/4. Functionally, catalyzes the decarboxylation of four acetate groups of uroporphyrinogen-III to yield coproporphyrinogen-III. The polypeptide is Uroporphyrinogen decarboxylase (Neisseria meningitidis serogroup C (strain 053442)).